The sequence spans 397 residues: Anhydro-N-acetylmuramic acid kinase (397 aa).

21–28 (GTSLDGVD) is a binding site for ATP. A compositionally biased stretch (polar residues) spans 373–384 (TPTNLPSVTGAS). A disordered region spans residues 373-397 (TPTNLPSVTGASARTPLGSLSVPGP).

This sequence belongs to the anhydro-N-acetylmuramic acid kinase family.

It carries out the reaction 1,6-anhydro-N-acetyl-beta-muramate + ATP + H2O = N-acetyl-D-muramate 6-phosphate + ADP + H(+). It functions in the pathway amino-sugar metabolism; 1,6-anhydro-N-acetylmuramate degradation. It participates in cell wall biogenesis; peptidoglycan recycling. In terms of biological role, catalyzes the specific phosphorylation of 1,6-anhydro-N-acetylmuramic acid (anhMurNAc) with the simultaneous cleavage of the 1,6-anhydro ring, generating MurNAc-6-P. Is required for the utilization of anhMurNAc either imported from the medium or derived from its own cell wall murein, and thus plays a role in cell wall recycling. The protein is Anhydro-N-acetylmuramic acid kinase of Salinibacter ruber (strain DSM 13855 / M31).